Consider the following 852-residue polypeptide: Alanine--tRNA ligase (852 aa).

Zn(2+) contacts are provided by H554, H558, C656, and H660.

This sequence belongs to the class-II aminoacyl-tRNA synthetase family. Zn(2+) is required as a cofactor.

The protein resides in the cytoplasm. The catalysed reaction is tRNA(Ala) + L-alanine + ATP = L-alanyl-tRNA(Ala) + AMP + diphosphate. Its function is as follows. Catalyzes the attachment of alanine to tRNA(Ala) in a two-step reaction: alanine is first activated by ATP to form Ala-AMP and then transferred to the acceptor end of tRNA(Ala). Also edits incorrectly charged Ser-tRNA(Ala) and Gly-tRNA(Ala) via its editing domain. This Campylobacter concisus (strain 13826) protein is Alanine--tRNA ligase.